The chain runs to 222 residues: N-(5'-phosphoribosyl)anthranilate isomerase (222 aa).

It belongs to the TrpF family.

The enzyme catalyses N-(5-phospho-beta-D-ribosyl)anthranilate = 1-(2-carboxyphenylamino)-1-deoxy-D-ribulose 5-phosphate. Its pathway is amino-acid biosynthesis; L-tryptophan biosynthesis; L-tryptophan from chorismate: step 3/5. This chain is N-(5'-phosphoribosyl)anthranilate isomerase, found in Prosthecochloris aestuarii (strain DSM 271 / SK 413).